The following is a 956-amino-acid chain: DNA polymerase I (956 aa).

Positions 209 to 296 (VTVRQWVDYR…VTDLPLDIEF (88 aa)) constitute a 5'-3' exonuclease domain.

Belongs to the DNA polymerase type-A family. Single-chain monomer with multiple functions.

It carries out the reaction DNA(n) + a 2'-deoxyribonucleoside 5'-triphosphate = DNA(n+1) + diphosphate. A DNA polymerase, required for DNA repair after DNA damage induced by ionizing radiation (IR); this is not the major DNA polymerase. Following severe irradiation (7 kGy of gamma irradiation) genomic DNA is fragmented. DNA is progressively degraded for the first 1.5 hours after IR, in a step promoted by RecA and counterbalanced by DNA Pol I and Pol III, followed by massive DNA synthesis and genome reassembly in the next hour. Optimal priming of DNA synthesis requires both RecA and RadA, Pol III initiates DNA synthesis while both Pol I and Pol III are required for its continuation. May also have 5'-3' exonuclease activity. The protein is DNA polymerase I (polA) of Deinococcus radiodurans (strain ATCC 13939 / DSM 20539 / JCM 16871 / CCUG 27074 / LMG 4051 / NBRC 15346 / NCIMB 9279 / VKM B-1422 / R1).